A 180-amino-acid chain; its full sequence is Ribulose bisphosphate carboxylase small subunit, chloroplastic 4 (180 aa).

A chloroplast-targeting transit peptide spans 1–56 (MASSIVSSAAVATRANGAQASMVGPFTGLKSTASFPVSRKQNLDITSIASNGGRVR).

Belongs to the RuBisCO small chain family. In terms of assembly, heterohexadecamer of 8 large and 8 small subunits.

The protein localises to the plastid. Its subcellular location is the chloroplast. In terms of biological role, ruBisCO catalyzes two reactions: the carboxylation of D-ribulose 1,5-bisphosphate, the primary event in carbon dioxide fixation, as well as the oxidative fragmentation of the pentose substrate. Both reactions occur simultaneously and in competition at the same active site. Although the small subunit is not catalytic it is essential for maximal activity. In Solanum tuberosum (Potato), this protein is Ribulose bisphosphate carboxylase small subunit, chloroplastic 4.